Consider the following 1997-residue polypeptide: Chromatin-remodeling ATPase INO80 (1997 aa).

Disordered regions lie at residues 1–378 (MDHF…AAPS), 397–579 (IAAP…AENE), and 674–858 (ERKK…EKVV). Positions 12–25 (PHFDEDGTEGRGDR) are enriched in basic and acidic residues. The span at 32–41 (GPAPPPPPPR) shows a compositional bias: pro residues. The span at 49 to 64 (NPVSSNSAVQSQAAAA) shows a compositional bias: low complexity. Over residues 89–107 (STNSMRATPHSSSSFNLRS) the composition is skewed to polar residues. Residues 108–117 (PTREPSEYRH) are compositionally biased toward basic and acidic residues. 3 stretches are compositionally biased toward low complexity: residues 118 to 156 (PLSS…SLSS), 203 to 230 (SLQA…PLSA), and 240 to 251 (SSSSQPPARASQ). The span at 264–276 (SFRDRDSSVREKS) shows a compositional bias: basic and acidic residues. Residues 288–297 (EASNGISGSS) show a composition bias toward polar residues. Basic and acidic residues predominate over residues 298 to 317 (PRKDRDRDRDHRGTTRESQR). Composition is skewed to polar residues over residues 318-340 (RSVS…SASN) and 366-378 (VDNT…AAPS). The segment covering 411-420 (SPRLSLRPPS) has biased composition (low complexity). 3 stretches are compositionally biased toward polar residues: residues 433-442 (NPTNGTTSTA), 451-465 (SPPS…TNPS), and 472-481 (SFSNILSSSE). Composition is skewed to basic and acidic residues over residues 500 to 519 (VPMK…EKKE) and 529 to 540 (RISDIRHSESTP). A coiled-coil region spans residues 666 to 735 (ERELFAEKER…VQQTRLILQK (70 aa)). Residues 689–707 (MATTMEAKAAALARASAAQ) are compositionally biased toward low complexity. A compositionally biased stretch (basic and acidic residues) spans 709–723 (EAERQKYMREAERAN). Positions 769–781 (TKGKGRAGARPKK) are enriched in basic residues. Residues 782–793 (SKEQKQAEKDAA) are compositionally biased toward basic and acidic residues. Residues 794-806 (EAAQAALDAGLEL) show a composition bias toward low complexity. Over residues 824-858 (APKEADVDKDKENKEPQEPKEPKEPKEKVIKEKVV) the composition is skewed to basic and acidic residues. The DBINO domain occupies 881-1006 (IWRDLARKDV…SHFIGKKIKT (126 aa)). The Helicase ATP-binding domain maps to 1130–1302 (VNLYEQGING…WALLHFIMPS (173 aa)). ATP is bound at residue 1143–1150 (DEMGLGKT). A DEAQ box motif is present at residues 1253–1256 (DEAQ). In terms of domain architecture, Helicase C-terminal spans 1702-1858 (KLDELLRELK…GSSAAGGGVD (157 aa)). The span at 1891–1902 (ELLESGELDKMQ) shows a compositional bias: basic and acidic residues. A disordered region spans residues 1891-1986 (ELLESGELDK…GSKKAKTTKQ (96 aa)). A compositionally biased stretch (basic residues) spans 1903-1914 (KKSRGGNKRKRG). Residues 1919 to 1933 (EGKEVSLDEMYHEGE) are compositionally biased toward basic and acidic residues. Residues 1954–1967 (AAGGEGGDGKGAVG) are compositionally biased toward gly residues. The segment covering 1970–1985 (AKKRKTGGSKKAKTTK) has biased composition (basic residues).

The protein belongs to the SNF2/RAD54 helicase family. Component of the INO80 chromatin-remodeling complex.

The protein localises to the nucleus. It catalyses the reaction ATP + H2O = ADP + phosphate + H(+). Functionally, ATPase component of the INO80 complex which remodels chromatin by shifting nucleosomes and is involved in DNA repair. The sequence is that of Chromatin-remodeling ATPase INO80 (crf2-1) from Neurospora crassa (strain ATCC 24698 / 74-OR23-1A / CBS 708.71 / DSM 1257 / FGSC 987).